Consider the following 156-residue polypeptide: ADP-ribose 1''-phosphate phosphatase (156 aa).

Positions Met-1 to Ile-156 constitute a Macro domain. Residues Gly-7–Leu-9, Ala-25–Asn-27, Trp-32–Ala-37, and Ile-127–Gly-133 each bind substrate.

The protein belongs to the POA1 family.

It catalyses the reaction ADP-alpha-D-ribose 1''-phosphate + H2O = ADP-D-ribose + phosphate. Highly specific phosphatase involved in the metabolism of ADP-ribose 1''-phosphate (Appr1p) which is produced as a consequence of tRNA splicing. The chain is ADP-ribose 1''-phosphate phosphatase (POA1) from Candida albicans (strain SC5314 / ATCC MYA-2876) (Yeast).